A 372-amino-acid polypeptide reads, in one-letter code: GDSL esterase/lipase At1g54020 (372 aa).

An N-terminal signal peptide occupies residues 1 to 26 (MECSSVSVLGILLVFPLLHNLVTISG). Serine 40 serves as the catalytic Nucleophile. N-linked (GlcNAc...) asparagine glycosylation is found at asparagine 161 and asparagine 280. Residues aspartate 314 and histidine 317 contribute to the active site.

Belongs to the 'GDSL' lipolytic enzyme family.

It localises to the secreted. The chain is GDSL esterase/lipase At1g54020 from Arabidopsis thaliana (Mouse-ear cress).